Here is a 366-residue protein sequence, read N- to C-terminus: Pyruvate dehydrogenase E1 component subunit beta, mitochondrial (366 aa).

The N-terminal 33 residues, 1 to 33 (MFSRLPTSLARNVARRAPTSFVRPSAAAAALRF), are a transit peptide targeting the mitochondrion. Residue E95 coordinates thiamine diphosphate. 4 residues coordinate K(+): A196, I197, D199, and N201.

As to quaternary structure, pyruvate dehydrogenase (E1) is a tetramer of 2 alpha and 2 beta subunits. Eukaryotic pyruvate dehydrogenase (PDH) complexes are organized as a core consisting of the oligomeric dihydrolipoamide acetyl-transferase (E2), around which are arranged multiple copies of pyruvate dehydrogenase (E1), dihydrolipoamide dehydrogenase (E3) and protein X (E3BP) bound by non-covalent bonds. Thiamine diphosphate serves as cofactor.

Its subcellular location is the mitochondrion matrix. The enzyme catalyses N(6)-[(R)-lipoyl]-L-lysyl-[protein] + pyruvate + H(+) = N(6)-[(R)-S(8)-acetyldihydrolipoyl]-L-lysyl-[protein] + CO2. Its function is as follows. The pyruvate dehydrogenase complex catalyzes the overall conversion of pyruvate to acetyl-CoA and CO(2). In Saccharomyces cerevisiae (strain ATCC 204508 / S288c) (Baker's yeast), this protein is Pyruvate dehydrogenase E1 component subunit beta, mitochondrial (PDB1).